The sequence spans 93 residues: uncharacterized protein (93 aa).

This sequence to M.tuberculosis Rv1738.

This is an uncharacterized protein from Mycobacterium tuberculosis (strain CDC 1551 / Oshkosh).